We begin with the raw amino-acid sequence, 248 residues long: Probable transcriptional regulatory protein Msil_2305 (248 aa).

Belongs to the TACO1 family.

It localises to the cytoplasm. The sequence is that of Probable transcriptional regulatory protein Msil_2305 from Methylocella silvestris (strain DSM 15510 / CIP 108128 / LMG 27833 / NCIMB 13906 / BL2).